A 344-amino-acid polypeptide reads, in one-letter code: N-acetyl-gamma-glutamyl-phosphate reductase (344 aa).

Residue Cys149 is part of the active site.

The protein belongs to the NAGSA dehydrogenase family. Type 1 subfamily.

The protein resides in the cytoplasm. It carries out the reaction N-acetyl-L-glutamate 5-semialdehyde + phosphate + NADP(+) = N-acetyl-L-glutamyl 5-phosphate + NADPH + H(+). It participates in amino-acid biosynthesis; L-arginine biosynthesis; N(2)-acetyl-L-ornithine from L-glutamate: step 3/4. In terms of biological role, catalyzes the NADPH-dependent reduction of N-acetyl-5-glutamyl phosphate to yield N-acetyl-L-glutamate 5-semialdehyde. This chain is N-acetyl-gamma-glutamyl-phosphate reductase, found in Shouchella clausii (strain KSM-K16) (Alkalihalobacillus clausii).